We begin with the raw amino-acid sequence, 449 residues long: Glutamyl-tRNA reductase (449 aa).

Residues 48-51 (TCNR), Ser99, 104-106 (EDQ), and Gln110 contribute to the substrate site. Cys49 acts as the Nucleophile in catalysis. NADP(+) is bound at residue 179–184 (GAGEIG).

This sequence belongs to the glutamyl-tRNA reductase family. In terms of assembly, homodimer.

The catalysed reaction is (S)-4-amino-5-oxopentanoate + tRNA(Glu) + NADP(+) = L-glutamyl-tRNA(Glu) + NADPH + H(+). Its pathway is porphyrin-containing compound metabolism; protoporphyrin-IX biosynthesis; 5-aminolevulinate from L-glutamyl-tRNA(Glu): step 1/2. In terms of biological role, catalyzes the NADPH-dependent reduction of glutamyl-tRNA(Glu) to glutamate 1-semialdehyde (GSA). This Methanosarcina barkeri (strain Fusaro / DSM 804) protein is Glutamyl-tRNA reductase.